The primary structure comprises 201 residues: ATP synthase subunit delta, chloroplastic (201 aa).

It belongs to the ATPase delta chain family. In terms of assembly, F-type ATPases have 2 components, F(1) - the catalytic core - and F(0) - the membrane proton channel. F(1) has five subunits: alpha(3), beta(3), gamma(1), delta(1), epsilon(1). CF(0) has four main subunits: a(1), b(1), b'(1) and c(10-14). The alpha and beta chains form an alternating ring which encloses part of the gamma chain. F(1) is attached to F(0) by a central stalk formed by the gamma and epsilon chains, while a peripheral stalk is formed by the delta, b and b' chains.

The protein resides in the plastid. It is found in the chloroplast thylakoid membrane. Functionally, f(1)F(0) ATP synthase produces ATP from ADP in the presence of a proton or sodium gradient. F-type ATPases consist of two structural domains, F(1) containing the extramembraneous catalytic core and F(0) containing the membrane proton channel, linked together by a central stalk and a peripheral stalk. During catalysis, ATP synthesis in the catalytic domain of F(1) is coupled via a rotary mechanism of the central stalk subunits to proton translocation. In terms of biological role, this protein is part of the stalk that links CF(0) to CF(1). It either transmits conformational changes from CF(0) to CF(1) or is implicated in proton conduction. The protein is ATP synthase subunit delta, chloroplastic of Vaucheria litorea (Yellow-green alga).